The chain runs to 255 residues: Hydroxyacylglutathione hydrolase (255 aa).

Residues His53, His55, Asp57, His58, His110, Asp127, and His165 each coordinate Zn(2+).

Belongs to the metallo-beta-lactamase superfamily. Glyoxalase II family. As to quaternary structure, monomer. Zn(2+) serves as cofactor.

The catalysed reaction is an S-(2-hydroxyacyl)glutathione + H2O = a 2-hydroxy carboxylate + glutathione + H(+). The protein operates within secondary metabolite metabolism; methylglyoxal degradation; (R)-lactate from methylglyoxal: step 2/2. Its function is as follows. Thiolesterase that catalyzes the hydrolysis of S-D-lactoyl-glutathione to form glutathione and D-lactic acid. The polypeptide is Hydroxyacylglutathione hydrolase (Xanthomonas campestris pv. campestris (strain 8004)).